Here is a 296-residue protein sequence, read N- to C-terminus: GTPase Era (296 aa).

The Era-type G domain occupies 3 to 170; it reads KSGFVTIVGR…KELMFKYIPE (168 aa). A G1 region spans residues 11-18; that stretch reads GRPNVGKS. GTP is bound at residue 11–18; the sequence is GRPNVGKS. The tract at residues 37-41 is G2; sequence QTTRN. The G3 stretch occupies residues 58 to 61; it reads DTPG. GTP-binding positions include 58–62 and 120–123; these read DTPGI and NKID. Positions 120-123 are G4; the sequence is NKID. The segment at 149 to 151 is G5; sequence ISA. The region spanning 201-278 is the KH type-2 domain; that stretch reads LSEEVPHGIA…YIRLWVKVKE (78 aa).

This sequence belongs to the TRAFAC class TrmE-Era-EngA-EngB-Septin-like GTPase superfamily. Era GTPase family. As to quaternary structure, monomer.

The protein localises to the cytoplasm. Its subcellular location is the cell membrane. Functionally, an essential GTPase that binds both GDP and GTP, with rapid nucleotide exchange. Plays a role in 16S rRNA processing and 30S ribosomal subunit biogenesis and possibly also in cell cycle regulation and energy metabolism. In Clostridium botulinum (strain Langeland / NCTC 10281 / Type F), this protein is GTPase Era.